The primary structure comprises 126 residues: MARIAGVDLPRNKRIEIALTYIYGIGLSRSKEILKKTNIDADIRCQNLNDQQIVSIREILESSYQIEGDLKRFESMSIKRLMEISTYRGRRHRLGLPLRGQRTRTNARTRRGGKKTVAGKKKAPRK.

The disordered stretch occupies residues 97–126; that stretch reads PLRGQRTRTNARTRRGGKKTVAGKKKAPRK. Residues 101–126 are compositionally biased toward basic residues; it reads QRTRTNARTRRGGKKTVAGKKKAPRK.

Belongs to the universal ribosomal protein uS13 family. As to quaternary structure, part of the 30S ribosomal subunit.

It is found in the plastid. The protein resides in the chloroplast. Functionally, located at the top of the head of the 30S subunit, it contacts several helices of the 16S rRNA. The sequence is that of Small ribosomal subunit protein uS13c from Porphyra purpurea (Red seaweed).